We begin with the raw amino-acid sequence, 120 residues long: Large ribosomal subunit protein bL20 (120 aa).

This sequence belongs to the bacterial ribosomal protein bL20 family.

Its function is as follows. Binds directly to 23S ribosomal RNA and is necessary for the in vitro assembly process of the 50S ribosomal subunit. It is not involved in the protein synthesizing functions of that subunit. The sequence is that of Large ribosomal subunit protein bL20 from Ureaplasma urealyticum serovar 10 (strain ATCC 33699 / Western).